The chain runs to 580 residues: Arginine--tRNA ligase (580 aa).

A 'HIGH' region motif is present at residues 127–137 (PNLAKEMHVGH).

Belongs to the class-I aminoacyl-tRNA synthetase family. As to quaternary structure, monomer.

It is found in the cytoplasm. It catalyses the reaction tRNA(Arg) + L-arginine + ATP = L-arginyl-tRNA(Arg) + AMP + diphosphate. In Idiomarina loihiensis (strain ATCC BAA-735 / DSM 15497 / L2-TR), this protein is Arginine--tRNA ligase.